A 523-amino-acid polypeptide reads, in one-letter code: 3-hydroxybenzoate--CoA/4-hydroxybenzoate--CoA ligase (523 aa).

It belongs to the ATP-dependent AMP-binding enzyme family. Benzoate-CoA ligase subfamily.

The enzyme catalyses 4-hydroxybenzoate + ATP + CoA = 4-hydroxybenzoyl-CoA + AMP + diphosphate. It catalyses the reaction 3-hydroxybenzoate + ATP + CoA = 3-hydroxybenzoyl-CoA + AMP + diphosphate. In terms of biological role, catalyzes the ligation of 3-hydroxybenzoate or 4-hydroxybenzoate and CoA at the expense of ATP. The enzyme shows low activity towards benzoate, 4-aminobenzoate, 3-aminobenzoate, 3-fluorobenzoate, 4-fluorobenzoate, 3-chlorobenzoate, and 4-chlorobenzoate. There is no activity with 3,4-dihydroxybenzoate, 2,3-dihydroxybenzoate, and 2-hydroxybenzoate as substrates. This chain is 3-hydroxybenzoate--CoA/4-hydroxybenzoate--CoA ligase (hcl), found in Thauera aromatica.